A 197-amino-acid chain; its full sequence is dCTP deaminase, dUMP-forming (197 aa).

DCTP is bound by residues 105-110 (RSSMGR), Asp-123, 131-133 (TLE), Gln-152, Tyr-166, Lys-174, and Gln-178. Glu-133 acts as the Proton donor/acceptor in catalysis.

Belongs to the dCTP deaminase family. In terms of assembly, homotrimer.

It catalyses the reaction dCTP + 2 H2O = dUMP + NH4(+) + diphosphate. It participates in pyrimidine metabolism; dUMP biosynthesis; dUMP from dCTP: step 1/1. Bifunctional enzyme that catalyzes both the deamination of dCTP to dUTP and the hydrolysis of dUTP to dUMP without releasing the toxic dUTP intermediate. The polypeptide is dCTP deaminase, dUMP-forming (Methanosphaera stadtmanae (strain ATCC 43021 / DSM 3091 / JCM 11832 / MCB-3)).